A 436-amino-acid polypeptide reads, in one-letter code: Probable glucose-6-phosphate isomerase (436 aa).

Catalysis depends on Glu-272, which acts as the Proton donor. Residues His-293 and Lys-404 contribute to the active site.

This sequence belongs to the GPI family.

It localises to the cytoplasm. The catalysed reaction is alpha-D-glucose 6-phosphate = beta-D-fructose 6-phosphate. The protein operates within carbohydrate biosynthesis; gluconeogenesis. It participates in carbohydrate degradation; glycolysis; D-glyceraldehyde 3-phosphate and glycerone phosphate from D-glucose: step 2/4. In terms of biological role, catalyzes the reversible isomerization of glucose-6-phosphate to fructose-6-phosphate. This Haloarcula marismortui (strain ATCC 43049 / DSM 3752 / JCM 8966 / VKM B-1809) (Halobacterium marismortui) protein is Probable glucose-6-phosphate isomerase.